The chain runs to 212 residues: Large ribosomal subunit protein uL3 (212 aa).

An N5-methylglutamine modification is found at Gln-153.

This sequence belongs to the universal ribosomal protein uL3 family. In terms of assembly, part of the 50S ribosomal subunit. Forms a cluster with proteins L14 and L19. In terms of processing, methylated by PrmB.

Functionally, one of the primary rRNA binding proteins, it binds directly near the 3'-end of the 23S rRNA, where it nucleates assembly of the 50S subunit. This is Large ribosomal subunit protein uL3 from Shewanella frigidimarina (strain NCIMB 400).